Here is a 603-residue protein sequence, read N- to C-terminus: D-3-phosphoglycerate dehydrogenase 1, chloroplastic (603 aa).

The N-terminal 54 residues, 1 to 54, are a transit peptide targeting the chloroplast; it reads MSATAAASSSIAVATNSLRNVTLSSRSPLPSAISVAFPSRGRNTLQRRLVLVSC. Residues 210-211, D230, 289-291, and D315 each bind NAD(+); these read KV and VAR. R291 is a catalytic residue. Residue E320 is part of the active site. The Proton donor role is filled by H339. Residue 339–342 participates in NAD(+) binding; that stretch reads HLGA. Positions 531–603 constitute an ACT domain; sequence IILCRQVDQP…AVEEFVFLKL (73 aa).

This sequence belongs to the D-isomer specific 2-hydroxyacid dehydrogenase family. In terms of tissue distribution, ubiquitous, but highly expressed in roots. Expressed in vasculature, root and shoot meristems, distal part of cotyledons and leaves, anther, stigma and pollen grains. Detected at the tip of the cotyledons in late embryos.

The protein localises to the plastid. It localises to the chloroplast. The enzyme catalyses (2R)-3-phosphoglycerate + NAD(+) = 3-phosphooxypyruvate + NADH + H(+). The protein operates within amino-acid biosynthesis; L-serine biosynthesis; L-serine from 3-phospho-D-glycerate: step 1/3. With respect to regulation, partially inhibited by 5 mM serine. In terms of biological role, involved in the plastidial phosphorylated pathway of serine biosynthesis (PPSB). Required for mature pollen development. This chain is D-3-phosphoglycerate dehydrogenase 1, chloroplastic (PGDH1), found in Arabidopsis thaliana (Mouse-ear cress).